The chain runs to 145 residues: D-aminoacyl-tRNA deacylase (145 aa).

Residues 137-138 carry the Gly-cisPro motif, important for rejection of L-amino acids motif; sequence GP.

Belongs to the DTD family. In terms of assembly, homodimer.

It is found in the cytoplasm. The catalysed reaction is glycyl-tRNA(Ala) + H2O = tRNA(Ala) + glycine + H(+). It carries out the reaction a D-aminoacyl-tRNA + H2O = a tRNA + a D-alpha-amino acid + H(+). Functionally, an aminoacyl-tRNA editing enzyme that deacylates mischarged D-aminoacyl-tRNAs. Also deacylates mischarged glycyl-tRNA(Ala), protecting cells against glycine mischarging by AlaRS. Acts via tRNA-based rather than protein-based catalysis; rejects L-amino acids rather than detecting D-amino acids in the active site. By recycling D-aminoacyl-tRNA to D-amino acids and free tRNA molecules, this enzyme counteracts the toxicity associated with the formation of D-aminoacyl-tRNA entities in vivo and helps enforce protein L-homochirality. The polypeptide is D-aminoacyl-tRNA deacylase (Aeromonas hydrophila subsp. hydrophila (strain ATCC 7966 / DSM 30187 / BCRC 13018 / CCUG 14551 / JCM 1027 / KCTC 2358 / NCIMB 9240 / NCTC 8049)).